The sequence spans 249 residues: 23S rRNA (guanosine-2'-O-)-methyltransferase RlmB (249 aa).

Residues glycine 200, isoleucine 220, and leucine 229 each contribute to the S-adenosyl-L-methionine site.

Belongs to the class IV-like SAM-binding methyltransferase superfamily. RNA methyltransferase TrmH family. RlmB subfamily.

The protein localises to the cytoplasm. It catalyses the reaction guanosine(2251) in 23S rRNA + S-adenosyl-L-methionine = 2'-O-methylguanosine(2251) in 23S rRNA + S-adenosyl-L-homocysteine + H(+). Specifically methylates the ribose of guanosine 2251 in 23S rRNA. The sequence is that of 23S rRNA (guanosine-2'-O-)-methyltransferase RlmB from Xylella fastidiosa (strain Temecula1 / ATCC 700964).